The following is a 145-amino-acid chain: Ribosome-binding factor A (145 aa).

Positions 122–132 (KVQRDLESAPR) are enriched in basic and acidic residues. The interval 122-145 (KVQRDLESAPREDDEGEPASSSRD) is disordered.

This sequence belongs to the RbfA family. In terms of assembly, monomer. Binds 30S ribosomal subunits, but not 50S ribosomal subunits or 70S ribosomes.

Its subcellular location is the cytoplasm. One of several proteins that assist in the late maturation steps of the functional core of the 30S ribosomal subunit. Associates with free 30S ribosomal subunits (but not with 30S subunits that are part of 70S ribosomes or polysomes). Required for efficient processing of 16S rRNA. May interact with the 5'-terminal helix region of 16S rRNA. The protein is Ribosome-binding factor A of Methylorubrum extorquens (strain CM4 / NCIMB 13688) (Methylobacterium extorquens).